The chain runs to 234 residues: ATP synthase subunit delta, chloroplastic (234 aa).

A chloroplast-targeting transit peptide spans 1–47 (MASLQQTLFSLQSKLPPSSFQIARSLPLRKTFPIRINNGGNAAGARM). An N-acetylserine modification is found at serine 48. Asparagine 66 carries an N-linked (GlcNAc...) asparagine glycan. Threonine 234 carries the phosphothreonine modification.

This sequence belongs to the ATPase delta chain family. As to quaternary structure, F-type ATPases have 2 components, F(1) - the catalytic core - and F(0) - the membrane proton channel. F(1) has five subunits: alpha(3), beta(3), gamma(1), delta(1), epsilon(1). CF(0) has four main subunits: a(1), b(1), b'(1) and c(10-14). The alpha and beta chains form an alternating ring which encloses part of the gamma chain. F(1) is attached to F(0) by a central stalk formed by the gamma and epsilon chains, while a peripheral stalk is formed by the delta, b and b' chains.

It is found in the plastid. Its subcellular location is the chloroplast thylakoid membrane. F(1)F(0) ATP synthase produces ATP from ADP in the presence of a proton or sodium gradient. F-type ATPases consist of two structural domains, F(1) containing the extramembraneous catalytic core and F(0) containing the membrane proton channel, linked together by a central stalk and a peripheral stalk. During catalysis, ATP synthesis in the catalytic domain of F(1) is coupled via a rotary mechanism of the central stalk subunits to proton translocation (Potential). Essential for photosynthesis, probably by facilitating electron transport in both photosystems I and II. Functionally, this protein is part of the stalk that links CF(0) to CF(1). It either transmits conformational changes from CF(0) to CF(1) or is implicated in proton conduction. This chain is ATP synthase subunit delta, chloroplastic, found in Arabidopsis thaliana (Mouse-ear cress).